Here is a 465-residue protein sequence, read N- to C-terminus: Antithrombin-III (465 aa).

The first 32 residues, 1 to 32 (MISNGIGTVTTGKRSMCLFPLLLIGLWGCVTC), serve as a signal peptide directing secretion. 2 cysteine pairs are disulfide-bonded: Cys41/Cys161 and Cys54/Cys128. Residue Thr64 is modified to Phosphothreonine. At Ser69 the chain carries Phosphoserine. Trp82 provides a ligand contact to heparin. Residue Asn129 is glycosylated (N-linked (GlcNAc...) asparagine). Position 162 (Arg162) interacts with heparin. An N-linked (GlcNAc...) asparagine glycan is attached at Asn168. Arg178 provides a ligand contact to heparin. 2 N-linked (GlcNAc...) asparagine glycosylation sites follow: Asn188 and Asn225. Cys280 and Cys463 form a disulfide bridge.

It belongs to the serpin family. As to quaternary structure, forms protease inhibiting heterodimer with TMPRSS7. Post-translationally, phosphorylated by FAM20C in the extracellular medium. Plasma.

Its subcellular location is the secreted. The protein resides in the extracellular space. Most important serine protease inhibitor in plasma that regulates the blood coagulation cascade. AT-III inhibits thrombin, matriptase-3/TMPRSS7, as well as factors IXa, Xa and XIa. Its inhibitory activity is greatly enhanced in the presence of heparin. This Ovis aries (Sheep) protein is Antithrombin-III (SERPINC1).